The chain runs to 388 residues: Oligogalacturonate lyase (388 aa).

Its subcellular location is the periplasm. The catalysed reaction is 4-(4-deoxy-alpha-D-galact-4-enuronosyl)-D-galacturonate = 2 5-dehydro-4-deoxy-D-glucuronate. It functions in the pathway glycan metabolism; pectin degradation; 2-dehydro-3-deoxy-D-gluconate from pectin: step 3/5. Functionally, involved in degradation of pectin, which causes soft-rod disease in plants. The polypeptide is Oligogalacturonate lyase (ogl) (Dickeya dadantii (strain 3937) (Erwinia chrysanthemi (strain 3937))).